We begin with the raw amino-acid sequence, 92 residues long: PqqA binding protein (92 aa).

It belongs to the PqqD family. Monomer. Interacts with PqqE.

The protein operates within cofactor biosynthesis; pyrroloquinoline quinone biosynthesis. In terms of biological role, functions as a PqqA binding protein and presents PqqA to PqqE, in the pyrroloquinoline quinone (PQQ) biosynthetic pathway. This is PqqA binding protein from Stutzerimonas stutzeri (strain A1501) (Pseudomonas stutzeri).